We begin with the raw amino-acid sequence, 439 residues long: Xaa-Pro dipeptidase (439 aa).

Residues aspartate 244, aspartate 255, histidine 335, glutamate 380, and glutamate 419 each coordinate Mn(2+).

This sequence belongs to the peptidase M24B family. Bacterial-type prolidase subfamily. Mn(2+) serves as cofactor.

It catalyses the reaction Xaa-L-Pro dipeptide + H2O = an L-alpha-amino acid + L-proline. In terms of biological role, splits dipeptides with a prolyl residue in the C-terminal position. The polypeptide is Xaa-Pro dipeptidase (Shewanella amazonensis (strain ATCC BAA-1098 / SB2B)).